The sequence spans 382 residues: GDP-mannose transporter (382 aa).

The Cytoplasmic segment spans residues 1 to 40 (MADDKKTNEYTIEMDKLDHGNKDFEAPAPAVRPRGPPVAQ). The helical transmembrane segment at 41 to 61 (LANNPILPVLAYCGSSILMTV) threads the bilayer. The Lumenal portion of the chain corresponds to 62–71 (MNKYVLSGRD). The helical transmembrane segment at 72 to 92 (FNLNFFLLCVQSIVCIVAIQT) threads the bilayer. Residues 93 to 110 (CKVSKLITYRDFNSDEAK) are Cytoplasmic-facing. The helical transmembrane segment at 111–127 (KWFPITLLLIGMIYTGS) threads the bilayer. Residues 128-134 (KALQYLS) lie on the Lumenal side of the membrane. The helical transmembrane segment at 135-151 (IPVYTIFKNLTIILIAY) threads the bilayer. The Cytoplasmic segment spans residues 152–160 (GEVLWFGGS). The chain crosses the membrane as a helical span at residues 161-182 (VTGLTLFSFGLMVLSSIIAAWA). The Lumenal segment spans residues 183–200 (DIKHAVESSGDATAKVST). The chain crosses the membrane as a helical span at residues 201–221 (LNAGYIWMLINCLCTSSYVLG). Topologically, residues 222 to 233 (MRKRIKLTNFKD) are cytoplasmic. The chain crosses the membrane as a helical span at residues 234–254 (FDTMFYNNLLSIPVLLVLTFL). Residues 255 to 274 (MEDWSSANIARNFPSTDRNG) lie on the Lumenal side of the membrane. A helical transmembrane segment spans residues 275 to 295 (ILFAMILSGLSSVFISYTSAW). At 296–303 (CVRVTSST) the chain is on the cytoplasmic side. The chain crosses the membrane as a helical span at residues 304–324 (TYSMVGALNKLPIALSGLIFF). Over 325–327 (DAP) the chain is Lumenal. Residues 328–348 (VTFPSVSAIVVGFISGIVYAV) form a helical membrane-spanning segment. Over 349-382 (AKIKQSAKPKTGVLPMSNPPVSASSQSMRDSLRS) the chain is Cytoplasmic. Residues 358–382 (KTGVLPMSNPPVSASSQSMRDSLRS) form a disordered region. Polar residues predominate over residues 367 to 382 (PPVSASSQSMRDSLRS).

This sequence belongs to the TPT transporter family. SLC35D subfamily. As to quaternary structure, homooligomer.

Its subcellular location is the golgi apparatus membrane. The protein localises to the cytoplasmic vesicle membrane. The protein resides in the endoplasmic reticulum membrane. Functionally, involved in the import of GDP-mannose from the cytoplasm into the Golgi lumen. The protein is GDP-mannose transporter (gmt1) of Aspergillus fumigatus (strain CBS 144.89 / FGSC A1163 / CEA10) (Neosartorya fumigata).